The sequence spans 246 residues: Bis(5'-nucleosyl)-tetraphosphatase PrpE [asymmetrical] (246 aa).

It belongs to the PrpE family. Ni(2+) is required as a cofactor.

The enzyme catalyses P(1),P(4)-bis(5'-guanosyl) tetraphosphate + H2O = GMP + GTP + 2 H(+). In terms of biological role, asymmetrically hydrolyzes Ap4p to yield AMP and ATP. The protein is Bis(5'-nucleosyl)-tetraphosphatase PrpE [asymmetrical] of Bacillus cereus (strain AH187).